Here is a 49-residue protein sequence, read N- to C-terminus: Large ribosomal subunit protein bL33C (49 aa).

Residues 21–49 (KNKRNNPDRVEFKKYCPRDKKSTLHRETK) are disordered. The span at 25–49 (NNPDRVEFKKYCPRDKKSTLHRETK) shows a compositional bias: basic and acidic residues.

Belongs to the bacterial ribosomal protein bL33 family.

This is Large ribosomal subunit protein bL33C from Bacillus licheniformis (strain ATCC 14580 / DSM 13 / JCM 2505 / CCUG 7422 / NBRC 12200 / NCIMB 9375 / NCTC 10341 / NRRL NRS-1264 / Gibson 46).